The following is a 96-amino-acid chain: Large ribosomal subunit protein uL23 (96 aa).

Belongs to the universal ribosomal protein uL23 family. Part of the 50S ribosomal subunit. Contacts protein L29, and trigger factor when it is bound to the ribosome.

Functionally, one of the early assembly proteins it binds 23S rRNA. One of the proteins that surrounds the polypeptide exit tunnel on the outside of the ribosome. Forms the main docking site for trigger factor binding to the ribosome. The polypeptide is Large ribosomal subunit protein uL23 (Enterococcus faecalis (strain ATCC 700802 / V583)).